A 504-amino-acid polypeptide reads, in one-letter code: Glycerol kinase (504 aa).

ADP is bound at residue T13. 3 residues coordinate ATP: T13, T14, and S15. T13 contributes to the sn-glycerol 3-phosphate binding site. Position 17 (R17) interacts with ADP. The sn-glycerol 3-phosphate site is built by R83, E84, and Y135. Glycerol contacts are provided by R83, E84, and Y135. Phosphohistidine; by HPr is present on H231. D245 contributes to the sn-glycerol 3-phosphate binding site. Glycerol-binding residues include D245 and Q246. Residues T267 and G310 each contribute to the ADP site. 4 residues coordinate ATP: T267, G310, Q314, and G411. ADP is bound by residues G411 and N415.

It belongs to the FGGY kinase family. In terms of assembly, homotetramer and homodimer (in equilibrium). The phosphoenolpyruvate-dependent sugar phosphotransferase system (PTS), including enzyme I, and histidine-containing protein (HPr) are required for the phosphorylation, which leads to the activation of the enzyme.

It catalyses the reaction glycerol + ATP = sn-glycerol 3-phosphate + ADP + H(+). The protein operates within polyol metabolism; glycerol degradation via glycerol kinase pathway; sn-glycerol 3-phosphate from glycerol: step 1/1. Its activity is regulated as follows. Activated by phosphorylation and inhibited by fructose 1,6-bisphosphate (FBP). Key enzyme in the regulation of glycerol uptake and metabolism. Catalyzes the phosphorylation of glycerol to yield sn-glycerol 3-phosphate. This Ligilactobacillus salivarius (strain UCC118) (Lactobacillus salivarius) protein is Glycerol kinase.